The primary structure comprises 343 residues: Mediator of RNA polymerase II transcription subunit 2 (343 aa).

2 disordered regions span residues 105–141 (KQQQ…AQQL) and 252–277 (STNE…ISSN). The span at 107–132 (QQEEEQRRKHQAELEKNKRQQEHDAA) shows a compositional bias: basic and acidic residues. The span at 252-264 (STNEASTNNRNND) shows a compositional bias: polar residues.

This sequence belongs to the Mediator complex subunit 2 family. In terms of assembly, component of the Mediator complex.

It localises to the nucleus. Its function is as follows. Component of the Mediator complex, a coactivator involved in the regulated transcription of nearly all RNA polymerase II-dependent genes. Mediator functions as a bridge to convey information from gene-specific regulatory proteins to the basal RNA polymerase II transcription machinery. Mediator is recruited to promoters by direct interactions with regulatory proteins and serves as a scaffold for the assembly of a functional preinitiation complex with RNA polymerase II and the general transcription factors. This Eremothecium gossypii (strain ATCC 10895 / CBS 109.51 / FGSC 9923 / NRRL Y-1056) (Yeast) protein is Mediator of RNA polymerase II transcription subunit 2 (MED2).